The following is a 55-amino-acid chain: Trypsin inhibitor ClTI-1 (55 aa).

One can recognise a Kazal-like domain in the interval 1 to 55; that stretch reads SIPPACDKYSRLPGCPRDYSPVCGTDGKTYPNECVLCLSNSEENKNVQIYKSGMC. Intrachain disulfides connect cysteine 6–cysteine 37, cysteine 15–cysteine 34, and cysteine 23–cysteine 55.

It localises to the secreted. Inhibits trypsin and plasmin. The protein is Trypsin inhibitor ClTI-1 of Gallus gallus (Chicken).